A 491-amino-acid polypeptide reads, in one-letter code: Peptidoglycan D,D-transpeptidase PbpA (491 aa).

Residues 1–8 (MNTSLRRV) are Cytoplasmic-facing. Residues 9-29 (AVAIMVLIVLLLANATVTQVF) form a helical; Signal-anchor for type II membrane protein membrane-spanning segment. Residues 30–491 (AADGLRADPR…TIAAALREGS (462 aa)) lie on the Periplasmic side of the membrane. The tract at residues 160–484 (GSVVALEPST…AAPIGRATIA (325 aa)) is transpeptidase. Residue serine 222 is the Acyl-ester intermediate of the active site.

This sequence belongs to the transpeptidase family.

It is found in the cell inner membrane. The catalysed reaction is Preferential cleavage: (Ac)2-L-Lys-D-Ala-|-D-Ala. Also transpeptidation of peptidyl-alanyl moieties that are N-acyl substituents of D-alanine.. The protein operates within cell wall biogenesis; peptidoglycan biosynthesis. Transpeptidase that catalyzes cross-linking of the peptidoglycan cell wall. Required for the regulation of cell length. This chain is Peptidoglycan D,D-transpeptidase PbpA (pbpA), found in Mycolicibacterium smegmatis (strain ATCC 700084 / mc(2)155) (Mycobacterium smegmatis).